Reading from the N-terminus, the 1554-residue chain is Lysine-specific demethylase 5C (1554 aa).

The 42-residue stretch at 14 to 55 (CPVFEPSWAEFRDPLGYIAKIRPIAEKSGICKIRPPADWQPP) folds into the JmjN domain. Residues 79-169 (TRVKLNYLDQ…IVYPYEMYQS (91 aa)) enclose the ARID domain. Residues 197–207 (LRQSVQPSKFN) are compositionally biased toward polar residues. The interval 197–227 (LRQSVQPSKFNSYGRRAKRLQPDPEPTEEDI) is disordered. Glycyl lysine isopeptide (Lys-Gly) (interchain with G-Cter in SUMO2) cross-links involve residues lysine 205, lysine 229, lysine 244, and lysine 274. Residues 284 to 303 (ESTSPKTFLEGKEELSHSPE) form a disordered region. At serine 287 the chain carries Phosphoserine. Residue lysine 295 forms a Glycyl lysine isopeptide (Lys-Gly) (interchain with G-Cter in SUMO2) linkage. Phosphoserine is present on residues serine 301 and serine 317. The segment at 326–372 (VCRMCSRGDEDDKLLLCDGCDDNYHIFCLLPPLPEIPKGVWRCPKCV) adopts a PHD-type 1 zinc-finger fold. The JmjC domain occupies 468–634 (EYATSGWNLN…AGRQCIEHYR (167 aa)). Fe cation is bound by residues histidine 514, aspartate 517, and histidine 602. Phosphoserine is present on residues serine 893 and serine 897. Lysine 1127 participates in a covalent cross-link: Glycyl lysine isopeptide (Lys-Gly) (interchain with G-Cter in SUMO2). Residues 1187–1248 (ICVCGQVPAG…DTKFLCPLCM (62 aa)) form a PHD-type 2 zinc finger. 2 disordered regions span residues 1319 to 1364 (SKPE…EGSG) and 1437 to 1535 (AERH…APFS). The residue at position 1353 (serine 1353) is a Phosphoserine. Over residues 1442 to 1457 (SRTRGRALERRRRRKV) the composition is skewed to basic residues. The segment covering 1458-1475 (DRGGEPDDPAREELEPKR) has biased composition (basic and acidic residues). Acidic residues predominate over residues 1482–1497 (EAEEVQEEEELEEETG).

It belongs to the JARID1 histone demethylase family. In terms of assembly, part of two distinct complexes, one containing E2F6, and the other containing REST. Interacts with ZMYND8. Fe(2+) serves as cofactor.

It is found in the nucleus. It carries out the reaction N(6),N(6),N(6)-trimethyl-L-lysyl(4)-[histone H3] + 3 2-oxoglutarate + 3 O2 = L-lysyl(4)-[histone H3] + 3 formaldehyde + 3 succinate + 3 CO2. Functionally, histone demethylase that specifically demethylates 'Lys-4' of histone H3, thereby playing a central role in histone code. Does not demethylate histone H3 'Lys-9', H3 'Lys-27', H3 'Lys-36', H3 'Lys-79' or H4 'Lys-20'. Demethylates trimethylated and dimethylated but not monomethylated H3 'Lys-4'. Participates in transcriptional repression of neuronal genes by recruiting histone deacetylases and REST at neuron-restrictive silencer elements. Represses the CLOCK-BMAL1 heterodimer-mediated transcriptional activation of the core clock component PER2. This Mus musculus (Mouse) protein is Lysine-specific demethylase 5C (Kdm5c).